A 569-amino-acid chain; its full sequence is Proline--tRNA ligase (569 aa).

The protein belongs to the class-II aminoacyl-tRNA synthetase family. ProS type 1 subfamily. Homodimer.

It localises to the cytoplasm. It catalyses the reaction tRNA(Pro) + L-proline + ATP = L-prolyl-tRNA(Pro) + AMP + diphosphate. Its function is as follows. Catalyzes the attachment of proline to tRNA(Pro) in a two-step reaction: proline is first activated by ATP to form Pro-AMP and then transferred to the acceptor end of tRNA(Pro). As ProRS can inadvertently accommodate and process non-cognate amino acids such as alanine and cysteine, to avoid such errors it has two additional distinct editing activities against alanine. One activity is designated as 'pretransfer' editing and involves the tRNA(Pro)-independent hydrolysis of activated Ala-AMP. The other activity is designated 'posttransfer' editing and involves deacylation of mischarged Ala-tRNA(Pro). The misacylated Cys-tRNA(Pro) is not edited by ProRS. The protein is Proline--tRNA ligase of Nitrosospira multiformis (strain ATCC 25196 / NCIMB 11849 / C 71).